Here is a 1305-residue protein sequence, read N- to C-terminus: Adenylate cyclase type 9 (1305 aa).

The Cytoplasmic segment spans residues 1-110 (MASPVNQQLL…CFPQTQRRFR (110 aa)). The span at 46–55 (ISSSCSSGES) shows a compositional bias: low complexity. Positions 46–71 (ISSSCSSGESGVKKTGGSGGARRQKK) are disordered. The helical transmembrane segment at 111–131 (YALMYLSVAGLLWSIYFSVHM) threads the bilayer. Residues 132–134 (KTK) are Extracellular-facing. The helical transmembrane segment at 135–155 (LVSHLVPTLCFLIVCLGFFFF) threads the bilayer. The Cytoplasmic segment spans residues 156–164 (TFTKSYARH). The helical transmembrane segment at 165–185 (CTAISLLVTLLVFTLTLASQF) threads the bilayer. Residues 186–209 (QVLNPGLGSDSLSNLTSFSATGSS) lie on the Extracellular side of the membrane. N-linked (GlcNAc...) asparagine glycosylation occurs at Asn199. Residues 210 to 229 (SCLSQVGSFSICVEVLLLLY) form a helical membrane-spanning segment. Residues 230-235 (TVMHLP) lie on the Cytoplasmic side of the membrane. Residues 236–253 (LYLSACLGVAYSILFETF) form a helical membrane-spanning segment. The Extracellular portion of the chain corresponds to 254–274 (GYHFRDESCFVLLVGRMAHWE). Residues 275-295 (LLSKALLHVCIHAIGVHLFIM) form a helical membrane-spanning segment. Topologically, residues 296–778 (SEVRSRSTFL…VKTFASATFS (483 aa)) are cytoplasmic. A disordered region spans residues 343–369 (QGDDESENSVKRHSASSPKSRKKKSSI). A compositionally biased stretch (basic residues) spans 353 to 368 (KRHSASSPKSRKKKSS). Mg(2+)-binding residues include Asp393, Ile394, and Asp437. ATP is bound by residues 393–398 (DIVGFT), 435–437 (LGD), and Arg481. 2 stretches are compositionally biased toward polar residues: residues 607-618 (SDSHTNCTQPET) and 670-680 (ESSTGDTLTNS). Positions 607 to 680 (SDSHTNCTQP…SSTGDTLTNS (74 aa)) are disordered. Residues 779–799 (SLQDVLLNYFIFVLLSVACLL) traverse the membrane as a helical segment. At 800 to 810 (KPGTNTVSPPT) the chain is on the extracellular side. A helical transmembrane segment spans residues 811–831 (LALVLLSVCGLLGFLSLLVSV). The Cytoplasmic segment spans residues 832 to 859 (RMAFYLEDMLLCTRRLLEIISGWVPRHF). The helical transmembrane segment at 860–880 (IGTVLVCLPAAVIFSYLSSDF) threads the bilayer. Residues 881 to 883 (YTD) lie on the Extracellular side of the membrane. A helical transmembrane segment spans residues 884 to 904 (IHYTMFLCSALLIPMVQYCNF). The Cytoplasmic segment spans residues 905-911 (CQLSSSA). Residues 912-932 (LLLATITGATMLILIYLPLCP) form a helical membrane-spanning segment. The Extracellular segment spans residues 933 to 966 (QRPPLDPGTDIEANLSTSNSSYETLDNPRTELPF). Asn946 and Asn951 each carry an N-linked (GlcNAc...) asparagine glycan. The helical transmembrane segment at 967 to 987 (TRLGQEIAVAYFLLLLLVWFL) threads the bilayer. Residues 988–1305 (NREFDVSYRL…EERGRDGGAR (318 aa)) lie on the Cytoplasmic side of the membrane. Residues Lys1099, 1176–1178 (DIW), 1183–1187 (NIASR), and Lys1223 contribute to the ATP site. The segment at 1261 to 1305 (SIGRSPTDEISSLVTGGKGAVELGSGEAERKREKAEERGRDGGAR) is disordered. Residues 1287–1305 (EAERKREKAEERGRDGGAR) show a composition bias toward basic and acidic residues.

It belongs to the adenylyl cyclase class-4/guanylyl cyclase family. It depends on Mg(2+) as a cofactor. Requires Mn(2+) as cofactor. Detected in oocytes.

It is found in the cell membrane. The enzyme catalyses ATP = 3',5'-cyclic AMP + diphosphate. Functionally, adenylyl cyclase that catalyzes the formation of the signaling molecule cAMP in response to activation of G protein-coupled receptors. This is Adenylate cyclase type 9 (adcy9) from Xenopus laevis (African clawed frog).